Consider the following 423-residue polypeptide: Gamma-glutamyl phosphate reductase (423 aa).

The protein belongs to the gamma-glutamyl phosphate reductase family.

Its subcellular location is the cytoplasm. It catalyses the reaction L-glutamate 5-semialdehyde + phosphate + NADP(+) = L-glutamyl 5-phosphate + NADPH + H(+). Its pathway is amino-acid biosynthesis; L-proline biosynthesis; L-glutamate 5-semialdehyde from L-glutamate: step 2/2. Its function is as follows. Catalyzes the NADPH-dependent reduction of L-glutamate 5-phosphate into L-glutamate 5-semialdehyde and phosphate. The product spontaneously undergoes cyclization to form 1-pyrroline-5-carboxylate. The chain is Gamma-glutamyl phosphate reductase from Burkholderia ambifaria (strain ATCC BAA-244 / DSM 16087 / CCUG 44356 / LMG 19182 / AMMD) (Burkholderia cepacia (strain AMMD)).